Consider the following 286-residue polypeptide: UPF0761 membrane protein KPN78578_41360 (286 aa).

The next 7 helical transmembrane spans lie at 44–64 (LLSLVPLIAVVFALFAAFPMF), 74–94 (FIFANFIPATGDVIQGYIEQF), 104–124 (VGAFGLIVTSLLLMYSIDSAL), 140–160 (FAVYWMILTLGPLLAGASLAI), 183–203 (LFPLILSWAAFWLLYSIVPTT), 210–230 (AVIGALVAALLFEAGKKAFAL), and 244–264 (VISVVPILFVWVYWTWCIVLL).

Belongs to the UPF0761 family.

The protein resides in the cell inner membrane. This Klebsiella pneumoniae subsp. pneumoniae (strain ATCC 700721 / MGH 78578) protein is UPF0761 membrane protein KPN78578_41360.